Here is a 258-residue protein sequence, read N- to C-terminus: Acyl-[acyl-carrier-protein]--UDP-N-acetylglucosamine O-acyltransferase (258 aa).

Belongs to the transferase hexapeptide repeat family. LpxA subfamily. As to quaternary structure, homotrimer.

It is found in the cytoplasm. The enzyme catalyses a (3R)-hydroxyacyl-[ACP] + UDP-N-acetyl-alpha-D-glucosamine = a UDP-3-O-[(3R)-3-hydroxyacyl]-N-acetyl-alpha-D-glucosamine + holo-[ACP]. The protein operates within glycolipid biosynthesis; lipid IV(A) biosynthesis; lipid IV(A) from (3R)-3-hydroxytetradecanoyl-[acyl-carrier-protein] and UDP-N-acetyl-alpha-D-glucosamine: step 1/6. Its function is as follows. Involved in the biosynthesis of lipid A, a phosphorylated glycolipid that anchors the lipopolysaccharide to the outer membrane of the cell. This is Acyl-[acyl-carrier-protein]--UDP-N-acetylglucosamine O-acyltransferase from Myxococcus xanthus (strain DK1622).